The following is a 642-amino-acid chain: Bifunctional protein glk (642 aa).

The tract at residues 1-340 is glucokinase; sequence MSTGAQSKAV…QLSNRSGGAS (340 aa). 23–28 serves as a coordination point for ATP; it reads ADVGGT. The region spanning 341–417 is the HTH rpiR-type domain; that stretch reads SAVFERIRQM…LKLATGLTGT (77 aa). The segment at 341–642 is putative HTH-type transcriptional regulator; the sequence is SAVFERIRQM…SPAAKDVARD (302 aa). Positions 377–396 form a DNA-binding region, H-T-H motif; it reads IVDIARKADVSQPTVIRFCR. The 140-residue stretch at 461-600 folds into the SIS domain; that stretch reads AIEILNGARR…AVGVAIRRAS (140 aa). Residues 576–596 traverse the membrane as a helical segment; it reads SMISRILHLLMIDILAVGVAI.

It in the N-terminal section; belongs to the bacterial glucokinase family.

The protein resides in the membrane. The enzyme catalyses D-glucose + ATP = D-glucose 6-phosphate + ADP + H(+). The polypeptide is Bifunctional protein glk (glk) (Burkholderia orbicola (strain AU 1054)).